The primary structure comprises 240 residues: Coiled-coil domain-containing protein 152 (240 aa).

Residues 55-223 (MQTKEVAMKQ…LEQRLSVSKD (169 aa)) are a coiled coil.

The protein is Coiled-coil domain-containing protein 152 (CCDC152) of Bos taurus (Bovine).